The following is a 421-amino-acid chain: MKQTITEKIFSEHVQHAVYAGQIVETKIDMVIGNDITTPISIRAFKESGAKKLANPDGFAIVMDHYIPAKDIASANQAKISRDFAYEHDLKNFFDEKDMGIEHALMPEKGLVVPGDVIIGADSHTCTHGALGAFSTGMGSTDLAYAMITGKNWFKVPATIKVEFVGKPAKHIYGKDLILEVIRQIGVDGALYKALEFCGDAMKYLDMDSRFSLCNMAIEAGGKSGIIAVDDITKEFLESKNLRSKPKFHYSDEGANYEQVLRIDVSKLDPVIAYPFLPSNGKSINEALKDDLKIDQVFIGSCTNGRLSDLRIAARILKGKRVAKHTRLIITPATQKIALAAQKEGLMDIFVEAGAVVSNPTCGACLGGYMGILGAGERCVSTTNRNFVGRMGDRTSEVYLANSAVAAASAIAGKIADPRVL.

Positions 302, 362, and 365 each coordinate [4Fe-4S] cluster.

Belongs to the aconitase/IPM isomerase family. LeuC type 2 subfamily. As to quaternary structure, heterodimer of LeuC and LeuD. It depends on [4Fe-4S] cluster as a cofactor.

The enzyme catalyses (2R,3S)-3-isopropylmalate = (2S)-2-isopropylmalate. The protein operates within amino-acid biosynthesis; L-leucine biosynthesis; L-leucine from 3-methyl-2-oxobutanoate: step 2/4. Functionally, catalyzes the isomerization between 2-isopropylmalate and 3-isopropylmalate, via the formation of 2-isopropylmaleate. This is 3-isopropylmalate dehydratase large subunit from Campylobacter fetus subsp. fetus (strain 82-40).